Reading from the N-terminus, the 87-residue chain is uncharacterized protein (87 aa).

Residues 29-49 (ILWMIIFVVIIAVIIYILISP) form a helical membrane-spanning segment.

It localises to the membrane. This is an uncharacterized protein from Methanocaldococcus jannaschii (strain ATCC 43067 / DSM 2661 / JAL-1 / JCM 10045 / NBRC 100440) (Methanococcus jannaschii).